The following is a 304-amino-acid chain: MKIAFFSSGTFGLPVLEELKKENHEIVLITKVDAPSGRGLKLQPSPPAVVAEALQIPIVKVNSLKNDFIEWYFSQGFDVAIVVDFGFYIPKQLFQADKPVMVNIHPSLLPKYRGPNPIRRAICSGELETGVTLIKISEKMDEGDIYLQERVLIDPDDDYVSLTPKLQHVSMELLKKFFLELKQGNLRAFPQLGDPSYAPKFTPDELWIDWQKPAHDIQNQVRALADVGAKTTLGSKLVKIFKVRISGMEDSLPPGHYVAEKESLYVGTGQGSLEILSLQQEGRKKQDAASFVKGLREKEGVFGG.

(6S)-5,6,7,8-tetrahydrofolate is bound at residue 107–110; sequence SLLP.

The protein belongs to the Fmt family.

The enzyme catalyses L-methionyl-tRNA(fMet) + (6R)-10-formyltetrahydrofolate = N-formyl-L-methionyl-tRNA(fMet) + (6S)-5,6,7,8-tetrahydrofolate + H(+). Attaches a formyl group to the free amino group of methionyl-tRNA(fMet). The formyl group appears to play a dual role in the initiator identity of N-formylmethionyl-tRNA by promoting its recognition by IF2 and preventing the misappropriation of this tRNA by the elongation apparatus. In Coprothermobacter proteolyticus (strain ATCC 35245 / DSM 5265 / OCM 4 / BT), this protein is Methionyl-tRNA formyltransferase.